The chain runs to 327 residues: Zinc transport protein ZntB (327 aa).

Over 1 to 273 (MEAIKGSDVN…ARRTYTMSLM (273 aa)) the chain is Cytoplasmic. A helical membrane pass occupies residues 274-294 (AMVFLPSTFLTGLFGVNLGGI). Over 295–300 (PGGGWQ) the chain is Periplasmic. Residues 301-321 (FGFSIFCILLVVLIGGVALWL) form a helical membrane-spanning segment. The Cytoplasmic portion of the chain corresponds to 322 to 327 (YRSKWL).

This sequence belongs to the CorA metal ion transporter (MIT) (TC 1.A.35) family.

The protein resides in the cell inner membrane. It catalyses the reaction Zn(2+)(out) + H(+)(out) = Zn(2+)(in) + H(+)(in). Functionally, zinc transporter. Acts as a Zn(2+):proton symporter, which likely mediates zinc ion uptake. This chain is Zinc transport protein ZntB, found in Shigella flexneri serotype 5b (strain 8401).